We begin with the raw amino-acid sequence, 367 residues long: uncharacterized protein (367 aa).

Residues 1–96 (ITLHRLAELV…LTATLQLQPV (96 aa)) enclose the FAD-binding PCMH-type domain.

To M.tuberculosis Rv3790.

This is an uncharacterized protein from Streptomyces coelicolor.